Reading from the N-terminus, the 317-residue chain is MSFSSKVKNEICRYTELSREEAIAELSGIMKVSGTLGFSGDMKMNFRVSTENPAIARLTFKLLKDHFNIHTKIFVKKSNSLKKNNIYLVVIDNNMGVKDLLKEVGVLKEEEGMITLDYSVPERMVRDDNCRRVFIRGVFLGGGSISNPEKTYHLEFVTHHEDYAKELSEVINTYGLNSKVIQRKSSFVIYLKEGEQIVDLLNIIGAHDSLLELENVRIMKEMRNNVNRLVNCETANLSKTVNAAVRQIGSIKLIEEEIGLQRLPENLREVAELRLNFPNESLKELGQMLDPPVGKSGINHRLRRIEKIAEELRKEGK.

Residues 281-314 constitute a DNA-binding region (H-T-H motif); sequence SLKELGQMLDPPVGKSGINHRLRRIEKIAEELRK.

Belongs to the WhiA family.

Involved in cell division and chromosome segregation. In Clostridium novyi (strain NT), this protein is Probable cell division protein WhiA.